A 598-amino-acid chain; its full sequence is Cytochrome P450 monooxygenase phmB (598 aa).

Residues 107-127 (VAAKIAALLFVAGLFWAVSVL) form a helical membrane-spanning segment. Asparagine 171, asparagine 428, and asparagine 494 each carry an N-linked (GlcNAc...) asparagine glycan. Cysteine 542 lines the heme pocket. N-linked (GlcNAc...) asparagine glycosylation is found at asparagine 549 and asparagine 581.

Belongs to the cytochrome P450 family. It depends on heme as a cofactor.

It is found in the membrane. The protein operates within mycotoxin biosynthesis. Cytochrome P450 monooxygenase; part of the gene cluster that mediates the biosynthesis of the mycotoxins phomacins, leucine-derived cytochalasans with potent actin polymerization-inhibitory activities and monocot-specific antigerminative activities. The first step in the pathway is catalyzed by the hybrid PKS-NRPS phmA, assisted by the enoyl reductase phmE, that are responsible for fusion of the leucine precursor and the polyketide backbone to produce a 2-pyrrolidone intermediate. The polyketide synthase module (PKS) of phmA is responsible for the synthesis of the polyketide backbone and the downstream nonribosomal peptide synthetase (NRPS) amidates the carboxyl end of the polyketide with the leucine precursor. Because phmA lacks a designated enoylreductase (ER) domain, the required activity is provided the enoyl reductase phmE. Reduction by the hydrolyase phmG, followed by dehydration and intra-molecular Diels-Alder cyclization by the Diels-Alderase phmD then yield the required isoindolone-fused macrocycle. A number of oxidative steps catalyzed by the tailoring cytochrome P450 monooxygenase phmB, the FAD-linked oxidoreductase phmC and the short-chain dehydrogenase/reductase phmF, are further required to afford the final products, phomacin D and phomacin E. The chain is Cytochrome P450 monooxygenase phmB from Phaeosphaeria nodorum (strain SN15 / ATCC MYA-4574 / FGSC 10173) (Glume blotch fungus).